The primary structure comprises 330 residues: Malate dehydrogenase (330 aa).

Position 13 to 19 (13 to 19 (GAAGQIG)) interacts with NAD(+). Positions 94 and 100 each coordinate substrate. NAD(+) is bound by residues Asn107, Gln114, and 131–133 (VGN). Substrate-binding residues include Asn133 and Arg164. The active-site Proton acceptor is the His189.

It belongs to the LDH/MDH superfamily. MDH type 2 family.

It catalyses the reaction (S)-malate + NAD(+) = oxaloacetate + NADH + H(+). Catalyzes the reversible oxidation of malate to oxaloacetate. The sequence is that of Malate dehydrogenase from Deinococcus radiodurans (strain ATCC 13939 / DSM 20539 / JCM 16871 / CCUG 27074 / LMG 4051 / NBRC 15346 / NCIMB 9279 / VKM B-1422 / R1).